Consider the following 271-residue polypeptide: N-acetylaspartate synthetase (271 aa).

Residues 1–38 (MTYRGTRKSPCCSPPPRCGPPLPSGPAGSALGPPSSGA) form a disordered region. The span at 12–24 (CSPPPRCGPPLPS) shows a compositional bias: pro residues. Residues 25–37 (GPAGSALGPPSSG) are compositionally biased toward low complexity. A helical transmembrane segment spans residues 89–109 (VYAVIIIMCFVVTKSLLVTCC). Positions 115 to 258 (LGMRYYYSRK…HSLLERLFFQ (144 aa)) constitute an N-acetyltransferase domain.

It belongs to the NAT8 family.

The protein resides in the cytoplasm. It localises to the microsome membrane. It is found in the mitochondrion membrane. The protein localises to the endoplasmic reticulum membrane. The catalysed reaction is L-aspartate + acetyl-CoA = N-acetyl-L-aspartate + CoA + H(+). Its function is as follows. Catalyzes the synthesis of N-acetylaspartate acid (NAA) from L-aspartate and acetyl-CoA. The protein is N-acetylaspartate synthetase (nat8l) of Xenopus tropicalis (Western clawed frog).